The primary structure comprises 276 residues: Large ribosomal subunit protein uL2 (276 aa).

Positions 221-276 are disordered; sequence RGSVMNPNDHPHGGGEGRAPIGRKAPVTPWGKPTLGLKTRKKKNKSDQYIIRRRKK.

This sequence belongs to the universal ribosomal protein uL2 family. Part of the 50S ribosomal subunit. Forms a bridge to the 30S subunit in the 70S ribosome.

In terms of biological role, one of the primary rRNA binding proteins. Required for association of the 30S and 50S subunits to form the 70S ribosome, for tRNA binding and peptide bond formation. It has been suggested to have peptidyltransferase activity; this is somewhat controversial. Makes several contacts with the 16S rRNA in the 70S ribosome. The polypeptide is Large ribosomal subunit protein uL2 (Brevibacillus brevis (strain 47 / JCM 6285 / NBRC 100599)).